The following is a 336-amino-acid chain: Ketoreductase adrE (336 aa).

An NADP(+)-binding site is contributed by Y171.

The protein belongs to the NAD(P)-dependent epimerase/dehydratase family. Dihydroflavonol-4-reductase subfamily.

It functions in the pathway secondary metabolite biosynthesis; terpenoid biosynthesis. Ketoreductase; part of the gene cluster that mediates the biosynthesis of andrastins, meroterpenoid compounds that exhibit inhibitory activity against ras farnesyltransferase, suggesting that they could be promising leads for antitumor agents. The first step of the pathway is the synthesis of 3,5-dimethylorsellinic acid (DMOA) by the polyketide synthase adrD via condensation of one acetyl-CoA starter unit with 3 malonyl-CoA units and 2 methylations. DMAO is then converted to farnesyl-DMAO by the prenyltransferase adrG. The methyltransferase adrK catalyzes the methylation of the carboxyl group of farnesyl-DMAO to farnesyl-DMAO methyl ester which is further converted to epoxyfarnesyl-DMAO methyl ester by the FAD-dependent monooxygenase adrH. The terpene cyclase adrI then catalyzes the carbon skeletal rearrangement to generate the andrastin E, the first compound in the pathway having the andrastin scaffold, with the tetracyclic ring system. The post-cyclization tailoring enzymes adrF, adrE, adrJ, and adrA, are involved in the conversion of andrastin E into andrastin A. The short chain dehydrogenase adrF is responsible for the oxidation of the C-3 a hydroxyl group of andrastin E to yield the corresponding ketone, andrastin D. The ketoreductase adrE stereoselectively reduces the carbonyl moiety to reverse the stereochemistry of the C-3 position to yield andrastin F. The acetyltransferase adrJ is the acetyltransferase that attaches the acetyl group to the C-3 hydroxyl group of andrastin F to yield andrastin C. Finally, the cytochrome P450 monooxygenase adrA catalyzes two sequential oxidation reactions of the C-23 methyl group, to generate the corresponding alcohol andrastin B, and aldehyde andrastin A. The sequence is that of Ketoreductase adrE from Penicillium rubens (strain ATCC 28089 / DSM 1075 / NRRL 1951 / Wisconsin 54-1255) (Penicillium chrysogenum).